A 370-amino-acid polypeptide reads, in one-letter code: 3-isopropylmalate dehydrogenase (370 aa).

77–90 (GPKWDSVPYEVRPE) lines the NAD(+) pocket. The substrate site is built by R97, R107, R135, and D226. D226, D250, and D254 together coordinate Mg(2+). 290 to 302 (GSAPDIAGKGIAN) contributes to the NAD(+) binding site.

This sequence belongs to the isocitrate and isopropylmalate dehydrogenases family. LeuB type 1 subfamily. Homodimer. It depends on Mg(2+) as a cofactor. The cofactor is Mn(2+).

It is found in the cytoplasm. The catalysed reaction is (2R,3S)-3-isopropylmalate + NAD(+) = 4-methyl-2-oxopentanoate + CO2 + NADH. The protein operates within amino-acid biosynthesis; L-leucine biosynthesis; L-leucine from 3-methyl-2-oxobutanoate: step 3/4. Functionally, catalyzes the oxidation of 3-carboxy-2-hydroxy-4-methylpentanoate (3-isopropylmalate) to 3-carboxy-4-methyl-2-oxopentanoate. The product decarboxylates to 4-methyl-2 oxopentanoate. This is 3-isopropylmalate dehydrogenase from Brucella melitensis biotype 1 (strain ATCC 23456 / CCUG 17765 / NCTC 10094 / 16M).